The primary structure comprises 996 residues: Sarcoplasmic/endoplasmic reticulum calcium ATPase 1 (996 aa).

Topologically, residues 1-48 (MENAHTKSPAECLSYFGVNEHTGLSPDQFKKNLDKFGYNELPAEEGKS) are cytoplasmic. A helical transmembrane segment spans residues 49–69 (IWDLIVEQFEDLLVRILLLAA). At 70-89 (CISFVLAWFEEGEETITAFV) the chain is on the lumenal side. The chain crosses the membrane as a helical span at residues 90–110 (EPFVILLILIANAIVGVWQER). The Cytoplasmic portion of the chain corresponds to 111 to 253 (NAEDAIEALK…QEKTPLQAKL (143 aa)). A helical membrane pass occupies residues 254–273 (DEFGEQLSKVISLICVAVWA). At 274-295 (INIGHFNDPVHGGSWIRGAVYY) the chain is on the lumenal side. A helical membrane pass occupies residues 296-313 (FKIAVALAVAAIPEGLPA). Residues valine 304, alanine 305, isoleucine 307, and glutamate 309 each coordinate Ca(2+). Residues 314 to 754 (VITTCLALGT…EEGRAIYNNM (441 aa)) lie on the Cytoplasmic side of the membrane. The active-site 4-aspartylphosphate intermediate is aspartate 351. Mg(2+)-binding residues include aspartate 351 and threonine 353. The ATP site is built by threonine 353, glutamate 442, arginine 489, lysine 512, arginine 557, threonine 622, glycine 623, aspartate 624, arginine 675, and lysine 681. Aspartate 700 lines the Mg(2+) pocket. Asparagine 703 is a binding site for ATP. The helical transmembrane segment at 755–774 (KQFIRYLISSNVGEVVCIFL) threads the bilayer. Residues asparagine 765 and glutamate 768 each coordinate Ca(2+). The Lumenal portion of the chain corresponds to 775–784 (TAALGLPEAL). A helical transmembrane segment spans residues 785–805 (IPVQLLWVNLVTDGLPATALG). Positions 785–805 (IPVQLLWVNLVTDGLPATALG) are interaction with PLN. Asparagine 793, threonine 796, and aspartate 797 together coordinate Ca(2+). The Cytoplasmic portion of the chain corresponds to 806 to 825 (FNPPDLDIMGKPPRSPKEPL). The chain crosses the membrane as a helical span at residues 826-848 (ISGWLFFRYMAIGGYVGAATVGG). Residues 849 to 894 (AAWWFLYDSTGPAVTYYQLSHFMQCHNHNEDFTGVDCDIFEASPPM) are Lumenal-facing. Residues cysteine 873 and cysteine 885 are joined by a disulfide bond. The chain crosses the membrane as a helical span at residues 895 to 914 (TMALSVLVTIEMCNALNSLS). Glutamate 905 contributes to the Ca(2+) binding site. Over 915–927 (ENQSLIRMPPWSN) the chain is Cytoplasmic. The chain crosses the membrane as a helical span at residues 928–946 (LWLMAAMTLSMSLHFMIIY). Positions 929–940 (WLMAAMTLSMSL) are interaction with PLN. Residues 947 to 961 (VDPLPMIFKLTHLTF) lie on the Lumenal side of the membrane. Residues 962–982 (DQWLMVFKLSFPVILIDEVLK) traverse the membrane as a helical segment. Topologically, residues 983–996 (FFARNYIETGKEVK) are cytoplasmic.

Belongs to the cation transport ATPase (P-type) (TC 3.A.3) family. Type IIA subfamily. In terms of assembly, interacts with sarcolipin (SLN). Interacts with phospholamban (PLN). Interacts with myoregulin (MRLN). Interacts with DWORF. The cofactor is Mg(2+).

It is found in the endoplasmic reticulum membrane. The protein resides in the sarcoplasmic reticulum membrane. It catalyses the reaction Ca(2+)(in) + ATP + H2O = Ca(2+)(out) + ADP + phosphate + H(+). Its activity is regulated as follows. Inhibited by sarcolipin (SLN) and myoregulin (MRLN). Also shown to be inhibited by phospholamban (PLN) in vitro. Enhanced by DWORF; DWORF increases activity by displacing sarcolipin (SLN), phospholamban (PLN) and myoregulin (MRLN). Functionally, key regulator of striated muscle performance by acting as the major Ca(2+) ATPase responsible for the reuptake of cytosolic Ca(2+) into the sarcoplasmic reticulum. Catalyzes the hydrolysis of ATP coupled with the translocation of calcium from the cytosol to the sarcoplasmic reticulum lumen. Contributes to calcium sequestration involved in muscular excitation/contraction. This Makaira nigricans (Atlantic blue marlin) protein is Sarcoplasmic/endoplasmic reticulum calcium ATPase 1 (atp2a1).